The primary structure comprises 247 residues: Pyridoxine 5'-phosphate synthase (247 aa).

Residue Asn12 coordinates 3-amino-2-oxopropyl phosphate. 14-15 (DH) lines the 1-deoxy-D-xylulose 5-phosphate pocket. Position 23 (Arg23) interacts with 3-amino-2-oxopropyl phosphate. The Proton acceptor role is filled by His48. Residues Arg50 and His55 each coordinate 1-deoxy-D-xylulose 5-phosphate. Glu75 functions as the Proton acceptor in the catalytic mechanism. Thr105 is a 1-deoxy-D-xylulose 5-phosphate binding site. The active-site Proton donor is His196. Residues Gly197 and 218-219 (GH) contribute to the 3-amino-2-oxopropyl phosphate site.

It belongs to the PNP synthase family. As to quaternary structure, homooctamer; tetramer of dimers.

The protein localises to the cytoplasm. It carries out the reaction 3-amino-2-oxopropyl phosphate + 1-deoxy-D-xylulose 5-phosphate = pyridoxine 5'-phosphate + phosphate + 2 H2O + H(+). The protein operates within cofactor biosynthesis; pyridoxine 5'-phosphate biosynthesis; pyridoxine 5'-phosphate from D-erythrose 4-phosphate: step 5/5. Catalyzes the complicated ring closure reaction between the two acyclic compounds 1-deoxy-D-xylulose-5-phosphate (DXP) and 3-amino-2-oxopropyl phosphate (1-amino-acetone-3-phosphate or AAP) to form pyridoxine 5'-phosphate (PNP) and inorganic phosphate. This chain is Pyridoxine 5'-phosphate synthase, found in Pseudomonas fluorescens (strain Pf0-1).